The sequence spans 309 residues: Homoserine O-succinyltransferase (309 aa).

Catalysis depends on C142, which acts as the Acyl-thioester intermediate. Residues K163 and S192 each contribute to the substrate site. H235 functions as the Proton acceptor in the catalytic mechanism. E237 is a catalytic residue. R249 lines the substrate pocket.

This sequence belongs to the MetA family.

The protein localises to the cytoplasm. The catalysed reaction is L-homoserine + succinyl-CoA = O-succinyl-L-homoserine + CoA. The protein operates within amino-acid biosynthesis; L-methionine biosynthesis via de novo pathway; O-succinyl-L-homoserine from L-homoserine: step 1/1. Its function is as follows. Transfers a succinyl group from succinyl-CoA to L-homoserine, forming succinyl-L-homoserine. In Klebsiella pneumoniae subsp. pneumoniae (strain ATCC 700721 / MGH 78578), this protein is Homoserine O-succinyltransferase.